The following is a 959-amino-acid chain: Translation initiation factor IF-2 (959 aa).

Over residues Met1–Thr10 the composition is skewed to basic and acidic residues. Residues Met1 to Ile374 are disordered. Over residues Glu27–His37 the composition is skewed to polar residues. 2 stretches are compositionally biased toward low complexity: residues Ala63–Pro118 and Gln128–Pro138. 2 stretches are compositionally biased toward basic and acidic residues: residues Ser154–Lys225 and Ala232–Arg241. Residues Gly246–Ala284 show a composition bias toward low complexity. Residues Pro318–Arg333 show a composition bias toward basic and acidic residues. Residues Ser457 to Lys626 form the tr-type G domain. A G1 region spans residues Gly466–Thr473. Gly466–Thr473 contacts GTP. Residues Gly491 to His495 form a G2 region. The tract at residues Asp512–Gly515 is G3. GTP-binding positions include Asp512–His516 and Asn566–Asp569. The G4 stretch occupies residues Asn566–Asp569. The segment at Ser602–Lys604 is G5.

Belongs to the TRAFAC class translation factor GTPase superfamily. Classic translation factor GTPase family. IF-2 subfamily.

Its subcellular location is the cytoplasm. In terms of biological role, one of the essential components for the initiation of protein synthesis. Protects formylmethionyl-tRNA from spontaneous hydrolysis and promotes its binding to the 30S ribosomal subunits. Also involved in the hydrolysis of GTP during the formation of the 70S ribosomal complex. The protein is Translation initiation factor IF-2 of Brucella melitensis biotype 1 (strain ATCC 23456 / CCUG 17765 / NCTC 10094 / 16M).